The sequence spans 195 residues: Dehydrin DHN1 (195 aa).

The disordered stretch occupies residues 1-195 (MAEYGDQYGR…IKEKLPGGHH (195 aa)). Over residues 37-48 (YGTTGTTVGYGT) the composition is skewed to low complexity. Positions 50–64 (QCVTTVTTGAQKTDQ) are enriched in polar residues. The segment covering 65 to 88 (YGTPGTTGAYGTDQYGTTGTTGEY) has biased composition (low complexity). Composition is skewed to basic and acidic residues over residues 136-153 (KEKIKEKLPGGGHGDDQT) and 173-195 (SPEHEEKKGIMDKIKEKLPGGHH).

This sequence belongs to the plant dehydrin family. Post-translationally, phosphorylated in vitro by CK2. As to expression, expressed in roots and leaves.

Its subcellular location is the cytoplasm. The protein localises to the nucleus. The chain is Dehydrin DHN1 from Avicennia marina (Grey mangrove).